The chain runs to 512 residues: DEAD-box ATP-dependent RNA helicase 5 (512 aa).

2 disordered regions span residues 1–33 (MGRS…KLEA) and 45–76 (ATST…GGGK). Residues 14-45 (SRKSKKEKKSKKDKKRKLEAEAEVVVVEAAAA) adopt a coiled-coil conformation. The span at 16–30 (KSKKEKKSKKDKKRK) shows a compositional bias: basic residues. The Q motif signature appears at 94-120 (SSFAATALPPQVLDCCKGFERPSPIQA). The region spanning 123–300 (WPYLLDGRDF…QEFMDPNPIK (178 aa)) is the Helicase ATP-binding domain. An ATP-binding site is contributed by 136 to 143 (AATGSGKT). The DEAD box motif lies at 248–251 (DEAD). Residues 333–476 (LLDKYHKAQR…VVPPALTKFG (144 aa)) form the Helicase C-terminal domain.

The protein belongs to the DEAD box helicase family. DDX5/DBP2 subfamily.

Its subcellular location is the nucleus. It localises to the nucleolus. It carries out the reaction ATP + H2O = ADP + phosphate + H(+). ATP-dependent RNA helicase required for 60S ribosomal subunit synthesis. Involved in efficient pre-rRNA processing, predominantly at site A3, which is necessary for the normal formation of 25S and 5.8S rRNAs. This chain is DEAD-box ATP-dependent RNA helicase 5, found in Oryza sativa subsp. japonica (Rice).